Here is a 342-residue protein sequence, read N- to C-terminus: Ferrochelatase (342 aa).

2 residues coordinate Fe cation: H188 and E268.

It belongs to the ferrochelatase family.

The protein localises to the cytoplasm. It carries out the reaction heme b + 2 H(+) = protoporphyrin IX + Fe(2+). It functions in the pathway porphyrin-containing compound metabolism; protoheme biosynthesis; protoheme from protoporphyrin-IX: step 1/1. Its function is as follows. Catalyzes the ferrous insertion into protoporphyrin IX. This Rickettsia conorii (strain ATCC VR-613 / Malish 7) protein is Ferrochelatase.